We begin with the raw amino-acid sequence, 340 residues long: UDP-N-acetylglucosamine--N-acetylmuramyl-(pentapeptide) pyrophosphoryl-undecaprenol N-acetylglucosamine transferase (340 aa).

Residues 10–12 (TGG), asparagine 110, serine 171, and glutamine 272 each bind UDP-N-acetyl-alpha-D-glucosamine.

The protein belongs to the glycosyltransferase 28 family. MurG subfamily.

Its subcellular location is the cell membrane. The catalysed reaction is di-trans,octa-cis-undecaprenyl diphospho-N-acetyl-alpha-D-muramoyl-L-alanyl-D-glutamyl-meso-2,6-diaminopimeloyl-D-alanyl-D-alanine + UDP-N-acetyl-alpha-D-glucosamine = di-trans,octa-cis-undecaprenyl diphospho-[N-acetyl-alpha-D-glucosaminyl-(1-&gt;4)]-N-acetyl-alpha-D-muramoyl-L-alanyl-D-glutamyl-meso-2,6-diaminopimeloyl-D-alanyl-D-alanine + UDP + H(+). The protein operates within cell wall biogenesis; peptidoglycan biosynthesis. In terms of biological role, cell wall formation. Catalyzes the transfer of a GlcNAc subunit on undecaprenyl-pyrophosphoryl-MurNAc-pentapeptide (lipid intermediate I) to form undecaprenyl-pyrophosphoryl-MurNAc-(pentapeptide)GlcNAc (lipid intermediate II). The protein is UDP-N-acetylglucosamine--N-acetylmuramyl-(pentapeptide) pyrophosphoryl-undecaprenol N-acetylglucosamine transferase of Wolbachia pipientis subsp. Culex pipiens (strain wPip).